The chain runs to 254 residues: MPKSSPLRLGVNIDHIATVRNARGGRHPDPVRAALTAIEAGADGITAHLREDRRHIRDNDMERLKAEISKPLNFEMAATPDMVRIALGVKPHAVCLVPERREELTTEGGLDVVGQRDSLAPSIARFNDAGIRVSLFIAADPAQIEMAAKLKAPAIELHTGAWCDAITDDEPAKVAEEWRRIVAGAALAQSAGLEVHAGHGLDYATAETIAALPQIVELNIGFYMIGEALFVGLGETVKAMRSAMDRGRARVIAA.

Asparagine 12 is a binding site for 3-amino-2-oxopropyl phosphate. 14–15 contacts 1-deoxy-D-xylulose 5-phosphate; it reads DH. Arginine 23 is a binding site for 3-amino-2-oxopropyl phosphate. The Proton acceptor role is filled by histidine 48. 1-deoxy-D-xylulose 5-phosphate-binding residues include arginine 50 and histidine 55. Glutamate 75 acts as the Proton acceptor in catalysis. Residue threonine 105 participates in 1-deoxy-D-xylulose 5-phosphate binding. Histidine 199 (proton donor) is an active-site residue. 3-amino-2-oxopropyl phosphate contacts are provided by residues glycine 200 and 221 to 222; that span reads GF.

Belongs to the PNP synthase family. In terms of assembly, homooctamer; tetramer of dimers.

The protein localises to the cytoplasm. It carries out the reaction 3-amino-2-oxopropyl phosphate + 1-deoxy-D-xylulose 5-phosphate = pyridoxine 5'-phosphate + phosphate + 2 H2O + H(+). It participates in cofactor biosynthesis; pyridoxine 5'-phosphate biosynthesis; pyridoxine 5'-phosphate from D-erythrose 4-phosphate: step 5/5. Catalyzes the complicated ring closure reaction between the two acyclic compounds 1-deoxy-D-xylulose-5-phosphate (DXP) and 3-amino-2-oxopropyl phosphate (1-amino-acetone-3-phosphate or AAP) to form pyridoxine 5'-phosphate (PNP) and inorganic phosphate. This Rhodopseudomonas palustris (strain HaA2) protein is Pyridoxine 5'-phosphate synthase.